The chain runs to 717 residues: Probable metal-nicotianamine transporter YSL12 (717 aa).

Residues 1 to 56 (MASHANASGGGGDEEMVEASTLRHRHGAGKDANGVGTERQLAAAAAEGEEEGPSSV) form a disordered region. 14 consecutive transmembrane segments (helical) span residues 76–96 (AFVV…KLNL), 99–119 (GIIP…VRLW), 144–164 (CVVA…LFGM), 186–206 (IGWM…ALVP), 248–268 (LGKF…YTAG), 306–326 (IVNV…WPLI), 351–371 (VFIS…KVLI), 422–442 (VAFG…PQIF), 450–470 (ILVA…GAGL), 482–502 (LAIF…LVGL), 536–556 (FVSQ…VFWL), 593–613 (LPKH…AINL), 636–656 (FYIG…LFVW), and 671–691 (VASG…ILAL).

Belongs to the YSL (TC 2.A.67.2) family. In terms of tissue distribution, expressed in root cortex and stele.

The protein resides in the membrane. May be involved in the transport of nicotianamine-chelated metals. This Oryza sativa subsp. japonica (Rice) protein is Probable metal-nicotianamine transporter YSL12 (YSL12).